A 329-amino-acid polypeptide reads, in one-letter code: Cysteine synthase (329 aa).

Residue lysine 48 is modified to N6-(pyridoxal phosphate)lysine. Pyridoxal 5'-phosphate-binding positions include asparagine 78, 183 to 187 (GTGGT), and serine 278.

It belongs to the cysteine synthase/cystathionine beta-synthase family. As to quaternary structure, homodimer. It depends on pyridoxal 5'-phosphate as a cofactor.

The catalysed reaction is O-acetyl-L-serine + hydrogen sulfide = L-cysteine + acetate. The protein operates within amino-acid biosynthesis; L-cysteine biosynthesis; L-cysteine from L-serine: step 2/2. In terms of biological role, catalyzes the conversion of O-acetylserine (OAS) to cysteine through the elimination of acetate and addition of hydrogen sulfide. The sequence is that of Cysteine synthase (srpG) from Synechococcus elongatus (strain ATCC 33912 / PCC 7942 / FACHB-805) (Anacystis nidulans R2).